The chain runs to 407 residues: uncharacterized protein (407 aa).

Residues 1–250 (MLDPLDILTN…LERDVLKQRL (250 aa)) enclose the EAL domain.

This is an uncharacterized protein from Bacillus subtilis (strain 168).